A 103-amino-acid chain; its full sequence is uncharacterized protein (103 aa).

The helical transmembrane segment at 38–58 threads the bilayer; the sequence is FTTLITIYVAAFYTGVIGAAV.

The protein resides in the membrane. This is an uncharacterized protein from Arabidopsis thaliana (Mouse-ear cress).